The sequence spans 595 residues: Aspartate--tRNA(Asp/Asn) ligase (595 aa).

Glu175 contacts L-aspartate. The interval 199-202 is aspartate; that stretch reads QQYK. Arg221 and His454 together coordinate L-aspartate. Position 221–223 (221–223) interacts with ATP; it reads RDE. Glu488 contributes to the ATP binding site. An L-aspartate-binding site is contributed by Arg495. 540-543 is an ATP binding site; sequence GIDR.

The protein belongs to the class-II aminoacyl-tRNA synthetase family. Type 1 subfamily. In terms of assembly, homodimer.

Its subcellular location is the cytoplasm. It catalyses the reaction tRNA(Asx) + L-aspartate + ATP = L-aspartyl-tRNA(Asx) + AMP + diphosphate. In terms of biological role, aspartyl-tRNA synthetase with relaxed tRNA specificity since it is able to aspartylate not only its cognate tRNA(Asp) but also tRNA(Asn). Reaction proceeds in two steps: L-aspartate is first activated by ATP to form Asp-AMP and then transferred to the acceptor end of tRNA(Asp/Asn). The chain is Aspartate--tRNA(Asp/Asn) ligase from Rhizobium meliloti (strain 1021) (Ensifer meliloti).